Reading from the N-terminus, the 450-residue chain is Cysteine protease ATG4C (450 aa).

The active-site Nucleophile is Cys112. Active-site residues include Asp336 and His338.

It belongs to the peptidase C54 family.

The protein localises to the cytoplasm. It carries out the reaction [protein]-C-terminal L-amino acid-glycyl-phosphatidylethanolamide + H2O = [protein]-C-terminal L-amino acid-glycine + a 1,2-diacyl-sn-glycero-3-phosphoethanolamine. Its function is as follows. Cysteine protease that plays a key role in autophagy by mediating both proteolytic activation and delipidation of ATG8 family proteins. The protease activity is required for proteolytic activation of ATG8 family proteins: cleaves the C-terminal amino acid of ATG8 proteins to reveal a C-terminal glycine. Exposure of the glycine at the C-terminus is essential for ATG8 proteins conjugation to phosphatidylethanolamine (PE) and insertion to membranes, which is necessary for autophagy. In addition to the protease activity, also mediates delipidation of ATG8 family proteins. Catalyzes delipidation of PE-conjugated forms of ATG8 proteins during macroautophagy. The sequence is that of Cysteine protease ATG4C from Xenopus laevis (African clawed frog).